The chain runs to 349 residues: D-arabinitol dehydrogenase 1 (349 aa).

Zn(2+)-binding residues include cysteine 46, histidine 67, cysteine 97, cysteine 100, cysteine 103, cysteine 111, and glutamate 151.

Belongs to the zinc-containing alcohol dehydrogenase family. Requires Zn(2+) as cofactor.

Its subcellular location is the cell projection. The catalysed reaction is D-arabinitol + NADP(+) = D-xylulose + NADPH + H(+). It carries out the reaction D-arabinitol + NADP(+) = D-ribulose + NADPH + H(+). Functionally, D-arabinitol dehydrogenase which mostly produces D-arabinitol in haustoria, the appendages of the parasitic fungus that penetrate the host's tissue and draws nutrients from it. D-arabinitol accumulation may serve as a carbohydrate storage compound. D-arabinitol is also capable of quenching reactive oxygen species involved in host plant defense reactions, thus providing protection for the rust fungus during the pathogenic interaction. This chain is D-arabinitol dehydrogenase 1 (ARD1), found in Uromyces fabae (Rust fungus).